The sequence spans 324 residues: Ribose-phosphate pyrophosphokinase 1 (324 aa).

ATP is bound by residues 39–41 (DGE) and 98–99 (RQ). 2 residues coordinate Mg(2+): His-132 and Asp-174. The active site involves Lys-197. Residues Arg-199, Asp-223, and 227 to 231 (DTAGT) contribute to the D-ribose 5-phosphate site.

Belongs to the ribose-phosphate pyrophosphokinase family. Class I subfamily. Homohexamer. Requires Mg(2+) as cofactor.

Its subcellular location is the cytoplasm. It carries out the reaction D-ribose 5-phosphate + ATP = 5-phospho-alpha-D-ribose 1-diphosphate + AMP + H(+). It participates in metabolic intermediate biosynthesis; 5-phospho-alpha-D-ribose 1-diphosphate biosynthesis; 5-phospho-alpha-D-ribose 1-diphosphate from D-ribose 5-phosphate (route I): step 1/1. Involved in the biosynthesis of the central metabolite phospho-alpha-D-ribosyl-1-pyrophosphate (PRPP) via the transfer of pyrophosphoryl group from ATP to 1-hydroxyl of ribose-5-phosphate (Rib-5-P). The protein is Ribose-phosphate pyrophosphokinase 1 of Lactococcus lactis subsp. lactis (strain IL1403) (Streptococcus lactis).